We begin with the raw amino-acid sequence, 430 residues long: Adenylosuccinate synthetase (430 aa).

GTP is bound by residues 13–19 (GDEGKGK) and 41–43 (GHT). D14 (proton acceptor) is an active-site residue. Mg(2+) is bound by residues D14 and G41. IMP contacts are provided by residues 14-17 (DEGK), 39-42 (NAGH), T130, R144, Q225, T240, and R304. H42 (proton donor) is an active-site residue. A substrate-binding site is contributed by 300–306 (STTGRAR). Residues R306, 332–334 (KLD), and 414–416 (STG) each bind GTP.

Belongs to the adenylosuccinate synthetase family. As to quaternary structure, homodimer. Mg(2+) is required as a cofactor.

The protein localises to the cytoplasm. It catalyses the reaction IMP + L-aspartate + GTP = N(6)-(1,2-dicarboxyethyl)-AMP + GDP + phosphate + 2 H(+). It functions in the pathway purine metabolism; AMP biosynthesis via de novo pathway; AMP from IMP: step 1/2. Its function is as follows. Plays an important role in the de novo pathway of purine nucleotide biosynthesis. Catalyzes the first committed step in the biosynthesis of AMP from IMP. The chain is Adenylosuccinate synthetase from Alcanivorax borkumensis (strain ATCC 700651 / DSM 11573 / NCIMB 13689 / SK2).